A 141-amino-acid polypeptide reads, in one-letter code: Large ribosomal subunit protein uL11 (141 aa).

This sequence belongs to the universal ribosomal protein uL11 family. Part of the ribosomal stalk of the 50S ribosomal subunit. Interacts with L10 and the large rRNA to form the base of the stalk. L10 forms an elongated spine to which L12 dimers bind in a sequential fashion forming a multimeric L10(L12)X complex. Post-translationally, one or more lysine residues are methylated.

Its function is as follows. Forms part of the ribosomal stalk which helps the ribosome interact with GTP-bound translation factors. The chain is Large ribosomal subunit protein uL11 from Synechocystis sp. (strain ATCC 27184 / PCC 6803 / Kazusa).